The chain runs to 226 residues: Gap junction beta-2 protein (226 aa).

An intramembrane segment occupies 2-13 (DWGALQTILGGV). The Cytoplasmic portion of the chain corresponds to 14 to 20 (NKYSTSI). The chain crosses the membrane as a helical span at residues 21 to 40 (GKIWLTVLFIFRIMILVVAA). The Extracellular segment spans residues 41 to 73 (KEVWGDEQADFVCNTLQPGCKNVCYDHYFPISH). The Ca(2+) site is built by E42, G45, and E47. 3 disulfide bridges follow: C53–C180, C60–C174, and C64–C169. A helical membrane pass occupies residues 74–94 (IRLWALQLIFVSTPALLVAMH). At 95-135 (VAYRRHEKKRKFIKGEIKNEFKDIEEIKTQKVRIEGSLWWT) the chain is on the cytoplasmic side. A helical membrane pass occupies residues 136-156 (YTSSIFFRVVFEAAFMYVFYV). Residues 157–189 (MYDGFSMQRLVKCNAWPCPNTVDCFVSRPTEKT) lie on the Extracellular side of the membrane. A helical membrane pass occupies residues 190–210 (VFTVFMIAVSGICILLNVTEL). Over 211 to 226 (CYLLIRYCSGKSKKPV) the chain is Cytoplasmic.

The protein belongs to the connexin family. Beta-type (group I) subfamily. A hemichannel or connexon is composed of a hexamer of connexins. A functional gap junction is formed by the apposition of two hemichannels. Forms heteromeric channels with GJB4. Interacts with CNST.

It localises to the cell membrane. The protein resides in the cell junction. The protein localises to the gap junction. Its function is as follows. Structural component of gap junctions. Gap junctions are dodecameric channels that connect the cytoplasm of adjoining cells. They are formed by the docking of two hexameric hemichannels, one from each cell membrane. Small molecules and ions diffuse from one cell to a neighboring cell via the central pore. In Macaca mulatta (Rhesus macaque), this protein is Gap junction beta-2 protein (GJB2).